Here is a 484-residue protein sequence, read N- to C-terminus: GDP-mannose transporter (484 aa).

2 stretches are compositionally biased toward basic and acidic residues: residues 1-12 and 19-28; these read MSMTTSRERNVP and ELGRSRHSDV. Positions 1-34 are disordered; that stretch reads MSMTTSRERNVPPDDNEIELGRSRHSDVAPESES. The Cytoplasmic segment spans residues 1-60; the sequence is MSMTTSRERNVPPDDNEIELGRSRHSDVAPESESPQAHLLNSDVASVTKNFMRNASHATA. The chain crosses the membrane as a helical span at residues 61–81; sequence NSGAIAAVLSYCIASISMTVI. Over 82 to 90 the chain is Lumenal; it reads NKFTVSGEK. Residues 91–111 form a helical membrane-spanning segment; that stretch reads FTMNLLVLLCQCSVGVAMVYA. Over 112–129 the chain is Cytoplasmic; it reads AKCMGWIQIRTLNMRDVK. The chain crosses the membrane as a helical span at residues 130–150; the sequence is TWFPISTMLVFVIYTGSKALQ. Residues 151–155 are Lumenal-facing; that stretch reads HMDIP. A helical transmembrane segment spans residues 156 to 176; that stretch reads IYTIFKNLTIILIAYGELLWF. Topologically, residues 177 to 179 are cytoplasmic; that stretch reads NGR. A helical transmembrane segment spans residues 180–200; that stretch reads ITPMVFLSFILMVLSSIIAAW. Residues 201–287 lie on the Lumenal side of the membrane; that stretch reads PDLAPSTAKT…ASSSTLSSWS (87 aa). The chain crosses the membrane as a helical span at residues 288–308; it reads TNGYVWMLANCMISATYVLVM. Topologically, residues 309–321 are cytoplasmic; it reads RKRIKLTGFKDWD. A helical transmembrane segment spans residues 322 to 342; that stretch reads TMFYNNLLSIPVLLFMSLLVE. A glycan (N-linked (GlcNAc...) asparagine) is linked at asparagine 343. Residues 343-360 are Lumenal-facing; sequence NWSVETFEHNFPREKRST. The helical transmembrane segment at 361 to 381 threads the bilayer; it reads LVFAILLSGTGGVFISYTTAW. Residues 382 to 390 are Cytoplasmic-facing; that stretch reads CIRVTSSTT. The helical transmembrane segment at 391 to 411 threads the bilayer; the sequence is YSMVGALNKLPLALSGMLFFG. At 412 to 413 the chain is on the lumenal side; the sequence is NP. The chain crosses the membrane as a helical span at residues 414-434; the sequence is VTPYNSIGVAVGFIAGIVYAV. Residues 435-484 lie on the Cytoplasmic side of the membrane; that stretch reads GKYKQVVAARIANSDATGASTSLSSSSSAAPSGEYVFDLKGEIPTHTRQQ.

It belongs to the TPT transporter family. SLC35D subfamily. In terms of assembly, homooligomer.

The protein resides in the golgi apparatus membrane. The protein localises to the cytoplasmic vesicle membrane. It localises to the endoplasmic reticulum membrane. In terms of biological role, involved in the import of GDP-mannose from the cytoplasm into the Golgi lumen. This is GDP-mannose transporter (VRG4) from Malassezia globosa (strain ATCC MYA-4612 / CBS 7966) (Dandruff-associated fungus).